The following is a 416-amino-acid chain: MKHKSEFLNFIQERGYLCQCTNIEGLDQLLLQNNYVVAYIGFDCTASSLHVGSLIQIMMLRHLQKFGYKPIVLLGGSTTKIGDPSGKDKARSVLPIEDINQNISGIKKALKKMVYFNDGKAGAIIVNNADWLDSIKYIDFLRDIGAHFSVNRMLSFDSAKTRLDREQNLSFLEFNYMLLQAYDFAELNKKYGCRLQIGGSDQWGNIVNGIELGKKLNLPELFGLTTPLLLSAQGKKMGKTESGTVWLDGDMLKPYDYWQYFRNIDDQDIGRFLRFFTDLPIDEIKKLESLKNQEINEAKKALATEVTKICHGDKEAELAQSSAVSVFENGDSSLLPDYTITKKQVANGISLIDLLHDIGLEPSKGAAKRLIQGNGCKVNDYTINDINYIINSKSFKDQSFIKLSAGKKRHIKVMVS.

L-tyrosine is bound at residue Tyr-39. The 'HIGH' region signature appears at 44-53; sequence CTASSLHVGS. L-tyrosine is bound by residues Tyr-176 and Gln-180. A 'KMSKS' region motif is present at residues 236 to 240; sequence KMGKT. Lys-239 contacts ATP. The region spanning 349-415 is the S4 RNA-binding domain; sequence ISLIDLLHDI…GKKRHIKVMV (67 aa).

It belongs to the class-I aminoacyl-tRNA synthetase family. TyrS type 1 subfamily. Homodimer.

The protein resides in the cytoplasm. The enzyme catalyses tRNA(Tyr) + L-tyrosine + ATP = L-tyrosyl-tRNA(Tyr) + AMP + diphosphate + H(+). Catalyzes the attachment of tyrosine to tRNA(Tyr) in a two-step reaction: tyrosine is first activated by ATP to form Tyr-AMP and then transferred to the acceptor end of tRNA(Tyr). The protein is Tyrosine--tRNA ligase of Wolbachia sp. subsp. Brugia malayi (strain TRS).